The primary structure comprises 426 residues: Glutamyl-tRNA reductase (426 aa).

Substrate is bound by residues threonine 49–arginine 52, serine 109, glutamate 114–glutamine 116, and glutamine 120. Cysteine 50 acts as the Nucleophile in catalysis. NADP(+) is bound at residue glycine 189 to serine 194.

The protein belongs to the glutamyl-tRNA reductase family. In terms of assembly, homodimer.

It carries out the reaction (S)-4-amino-5-oxopentanoate + tRNA(Glu) + NADP(+) = L-glutamyl-tRNA(Glu) + NADPH + H(+). The protein operates within porphyrin-containing compound metabolism; protoporphyrin-IX biosynthesis; 5-aminolevulinate from L-glutamyl-tRNA(Glu): step 1/2. It participates in porphyrin-containing compound metabolism; chlorophyll biosynthesis. Catalyzes the NADPH-dependent reduction of glutamyl-tRNA(Glu) to glutamate 1-semialdehyde (GSA). In Thermosynechococcus vestitus (strain NIES-2133 / IAM M-273 / BP-1), this protein is Glutamyl-tRNA reductase.